A 311-amino-acid polypeptide reads, in one-letter code: Asialoglycoprotein receptor 2 (311 aa).

The tract at residues 1 to 44 (MAKDFQDIQQLSSEENDHPFHQGEGPGTRRLNPRRGNPFLKGPP) is disordered. Residues 1–58 (MAKDFQDIQQLSSEENDHPFHQGEGPGTRRLNPRRGNPFLKGPPPAQPLAQRLCSMVC) are Cytoplasmic-facing. Positions 5–8 (FQDI) match the Endocytosis signal motif. At serine 13 the chain carries Phosphoserine. Cysteine 54 is lipidated: S-palmitoyl cysteine. A helical; Signal-anchor for type II membrane protein transmembrane segment spans residues 59–79 (FSLLALSFNILLLVVICVTGS). Residues 80–311 (QSEGHGGAQL…KRRNATGEVA (232 aa)) are Extracellular-facing. Residues asparagine 102 and asparagine 170 are each glycosylated (N-linked (GlcNAc...) asparagine). The 127-residue stretch at 176 to 302 (CCPVNWVEHQ…LQVYRWVCEK (127 aa)) folds into the C-type lectin domain. 3 disulfides stabilise this stretch: cysteine 177-cysteine 188, cysteine 205-cysteine 300, and cysteine 278-cysteine 292. A glycan (N-linked (GlcNAc...) asparagine) is linked at asparagine 305.

As to quaternary structure, the functioning ligand-binding unit of this receptor is thought to be at least a dimer. Interacts with LASS2. (Microbial infection) Interacts with hepatitis E virus capsid protein ORF2. As to expression, expressed exclusively in hepatic parenchymal cells.

The protein resides in the membrane. Functionally, mediates the endocytosis of plasma glycoproteins to which the terminal sialic acid residue on their complex carbohydrate moieties has been removed. The receptor recognizes terminal galactose and N-acetylgalactosamine units. After ligand binding to the receptor, the resulting complex is internalized and transported to a sorting organelle, where receptor and ligand are disassociated. The receptor then returns to the cell membrane surface. The polypeptide is Asialoglycoprotein receptor 2 (ASGR2) (Homo sapiens (Human)).